The primary structure comprises 1056 residues: Ribosomal protein S6 kinase delta-1 (1056 aa).

A PX domain is found at 8–132; the sequence is SADLARFYTV…DFFKGGVISD (125 aa). Residues 204 to 223 form a disordered region; it reads VGAVASDSEPSRVEDRESRS. The segment covering 212–222 has biased composition (basic and acidic residues); it reads EPSRVEDRESR. The MIT domain maps to 276–304; the sequence is VQGESSPTRREAVKRRTAEYLMRAESICS. Phosphoserine occurs at positions 281, 422, 423, 426, 446, 448, and 454. Residues 343–444 form the Protein kinase 1 domain; sequence GVIDKVLLVM…SMPPRVCLQQ (102 aa). The interval 426–504 is disordered; that stretch reads SLDIKEGRPS…KWLDSGSSSE (79 aa). Residues 443–454 are compositionally biased toward low complexity; sequence QQPSASPQGGSS. Residues 473–482 show a composition bias toward polar residues; that stretch reads TSLTPSSQDD. Residues S493 and S527 each carry the phosphoserine modification. The disordered stretch occupies residues 529–588; sequence SEESVMQPEGDKADTQAVSSPASLATGSVSPSTHLRVFSGGEDLEAVSSPPTSESLSRSK. Residues 544–561 are compositionally biased toward polar residues; the sequence is QAVSSPASLATGSVSPST. Low complexity predominate over residues 576-587; the sequence is SSPPTSESLSRS. S577, S599, S602, S634, S655, S658, S661, and S787 each carry phosphoserine. Residues 628–662 form a disordered region; that stretch reads TLEDGDSPSQSLDPGESKRESEAQDSVSRGSDDSV. Positions 789 to 1046 constitute a Protein kinase 2 domain; that stretch reads RSESDRLGQV…VEDIKSHPFF (258 aa). Residues 795–803 and K823 contribute to the ATP site; that span reads LGQVEVVVT. The Proton acceptor role is filled by D919.

The protein belongs to the protein kinase superfamily. Ser/Thr protein kinase family. S6 kinase subfamily. In terms of assembly, interacts with SPHK1 and phosphatidylinositol 3-phosphate. Interacts (via PX domain) with PRDX3.

The protein localises to the cytoplasm. It localises to the membrane. The protein resides in the early endosome. It carries out the reaction L-seryl-[protein] + ATP = O-phospho-L-seryl-[protein] + ADP + H(+). It catalyses the reaction L-threonyl-[protein] + ATP = O-phospho-L-threonyl-[protein] + ADP + H(+). Functionally, may be involved in transmitting sphingosine-1 phosphate (SPP)-mediated signaling into the cell. Plays a role in the recruitment of PRDX3 to early endosomes. The polypeptide is Ribosomal protein S6 kinase delta-1 (Rps6kc1) (Mus musculus (Mouse)).